Here is a 250-residue protein sequence, read N- to C-terminus: NAD-dependent protein deacylase 1 (250 aa).

Residues 1–250 (MRAVVELLAG…PELLRRAFPG (250 aa)) form the Deacetylase sirtuin-type domain. 19–39 (GAGVSAESGIPTFRDALGGLW) provides a ligand contact to NAD(+). Y64 and R67 together coordinate substrate. Residue 98–101 (QNVD) participates in NAD(+) binding. H116 (proton acceptor) is an active-site residue. Zn(2+) contacts are provided by C124, C127, C152, and C155. Residues 192 to 194 (GTS), 218 to 220 (NPQ), and A236 contribute to the NAD(+) site.

It belongs to the sirtuin family. Class III subfamily. Zn(2+) serves as cofactor.

The protein resides in the cytoplasm. The catalysed reaction is N(6)-acetyl-L-lysyl-[protein] + NAD(+) + H2O = 2''-O-acetyl-ADP-D-ribose + nicotinamide + L-lysyl-[protein]. It carries out the reaction N(6)-succinyl-L-lysyl-[protein] + NAD(+) + H2O = 2''-O-succinyl-ADP-D-ribose + nicotinamide + L-lysyl-[protein]. Its function is as follows. NAD-dependent lysine deacetylase and desuccinylase that specifically removes acetyl and succinyl groups on target proteins. Modulates the activities of several proteins which are inactive in their acylated form. In Pseudomonas aeruginosa (strain ATCC 15692 / DSM 22644 / CIP 104116 / JCM 14847 / LMG 12228 / 1C / PRS 101 / PAO1), this protein is NAD-dependent protein deacylase 1.